Here is a 446-residue protein sequence, read N- to C-terminus: D-inositol 3-phosphate glycosyltransferase (446 aa).

The disordered stretch occupies residues 1–21 (MSHYVGRLGRRSPAGSGRLRL). Residue His34 coordinates 1D-myo-inositol 3-phosphate. UDP-N-acetyl-alpha-D-glucosamine contacts are provided by residues 40–41 (QP) and Gly48. 1D-myo-inositol 3-phosphate-binding positions include 45–50 (DAGGMN), Lys103, Tyr136, Thr160, and Arg180. 3 residues coordinate UDP-N-acetyl-alpha-D-glucosamine: Arg255, Lys260, and Val321. 3 residues coordinate Mg(2+): Phe330, Arg331, and Ala333. Residues Glu343 and Glu351 each coordinate UDP-N-acetyl-alpha-D-glucosamine. Thr357 serves as a coordination point for Mg(2+).

Belongs to the glycosyltransferase group 1 family. MshA subfamily. Homodimer.

The catalysed reaction is 1D-myo-inositol 3-phosphate + UDP-N-acetyl-alpha-D-glucosamine = 1D-myo-inositol 2-acetamido-2-deoxy-alpha-D-glucopyranoside 3-phosphate + UDP + H(+). Functionally, catalyzes the transfer of a N-acetyl-glucosamine moiety to 1D-myo-inositol 3-phosphate to produce 1D-myo-inositol 2-acetamido-2-deoxy-glucopyranoside 3-phosphate in the mycothiol biosynthesis pathway. This Streptomyces scabiei (strain 87.22) protein is D-inositol 3-phosphate glycosyltransferase.